A 511-amino-acid polypeptide reads, in one-letter code: GMP synthase [glutamine-hydrolyzing] (511 aa).

The Glutamine amidotransferase type-1 domain occupies 5-195; that stretch reads DILVLDFGSQ…AKYACNCESI (191 aa). Cys-82 functions as the Nucleophile in the catalytic mechanism. Active-site residues include His-169 and Glu-171. The 191-residue stretch at 196–386 folds into the GMPS ATP-PPase domain; it reads WNMGSFAKTQ…LGLSKEVVYR (191 aa). 223-229 contributes to the ATP binding site; that stretch reads SGGVDSS.

As to quaternary structure, homodimer.

It catalyses the reaction XMP + L-glutamine + ATP + H2O = GMP + L-glutamate + AMP + diphosphate + 2 H(+). The protein operates within purine metabolism; GMP biosynthesis; GMP from XMP (L-Gln route): step 1/1. Functionally, catalyzes the synthesis of GMP from XMP. This is GMP synthase [glutamine-hydrolyzing] (guaA) from Campylobacter jejuni subsp. jejuni serotype O:2 (strain ATCC 700819 / NCTC 11168).